We begin with the raw amino-acid sequence, 440 residues long: General transcription factor IIE subunit 1 (440 aa).

Ala2 bears the N-acetylalanine mark. In terms of domain architecture, HTH TFE/IIEalpha-type spans 14–104 (LKRLAKYVIR…NYRTLVNVVK (91 aa)). The residue at position 67 (Lys67) is an N6-acetyllysine. Zn(2+) contacts are provided by Cys129, Cys132, Cys154, and Cys157. The segment at 129–157 (CPVCCSTFTDLEANQLFDPMTGTFRCTFC) adopts a C4-type zinc-finger fold. Residue Ser268 is modified to Phosphoserine. Over residues 333-353 (SSVTAGSVGAAAPVTAANGSD) the composition is skewed to low complexity. The disordered stretch occupies residues 333-395 (SSVTAGSVGA…EEFEEVADDP (63 aa)). Acidic residues-rich tracts occupy residues 354–364 (SESETSESDDD) and 381–393 (EDEEDEEFEEVAD).

Belongs to the TFIIE alpha subunit family. In terms of assembly, tetramer of two alpha and two beta chains. Interacts with TAF6/TAFII80. Interacts with ATF7IP. Interacts with SND1. Part of TBP-based Pol II pre-initiation complex (PIC), in which Pol II core assembles with general transcription factors and other specific initiation factors including GTF2E1, GTF2E2, GTF2F1, GTF2F2, TCEA1, ERCC2, ERCC3, GTF2H2, GTF2H3, GTF2H4, GTF2H5, GTF2A1, GTF2A2, GTF2B and TBP; this large multi-subunit PIC complex mediates DNA unwinding and targets Pol II core to the transcription start site where the first phosphodiester bond forms.

The protein resides in the nucleus. Recruits TFIIH to the initiation complex and stimulates the RNA polymerase II C-terminal domain kinase and DNA-dependent ATPase activities of TFIIH. Both TFIIH and TFIIE are required for promoter clearance by RNA polymerase. This is General transcription factor IIE subunit 1 (Gtf2e1) from Mus musculus (Mouse).